Reading from the N-terminus, the 96-residue chain is Small ribosomal subunit protein bS6 (96 aa).

This sequence belongs to the bacterial ribosomal protein bS6 family.

Binds together with bS18 to 16S ribosomal RNA. The sequence is that of Small ribosomal subunit protein bS6 (rpsF) from Mycobacterium leprae (strain TN).